Consider the following 242-residue polypeptide: Small ribosomal subunit protein uS2 (242 aa).

It belongs to the universal ribosomal protein uS2 family.

In Aeromonas salmonicida (strain A449), this protein is Small ribosomal subunit protein uS2.